A 390-amino-acid chain; its full sequence is UPF0229 protein Cbei_0567 (390 aa).

The disordered stretch occupies residues 77–108 (SGVGNEKRGEKLGNGNKKLAKGNQGAGNEEGD). Low complexity predominate over residues 89–103 (GNGNKKLAKGNQGAG).

Belongs to the UPF0229 family.

The sequence is that of UPF0229 protein Cbei_0567 from Clostridium beijerinckii (strain ATCC 51743 / NCIMB 8052) (Clostridium acetobutylicum).